A 1331-amino-acid chain; its full sequence is Serine/threonine-protein kinase SSK22 (1331 aa).

Residues 1034–1310 enclose the Protein kinase domain; sequence WQKRSFIGGG…AVELLIDPWM (277 aa). ATP contacts are provided by residues 1040–1048 and Lys-1063; that span reads IGGGTFGQV. The Proton acceptor role is filled by Asp-1158.

The protein belongs to the protein kinase superfamily. STE Ser/Thr protein kinase family. MAP kinase kinase kinase subfamily. Interacts with by SSK1.

It carries out the reaction L-seryl-[protein] + ATP = O-phospho-L-seryl-[protein] + ADP + H(+). The enzyme catalyses L-threonyl-[protein] + ATP = O-phospho-L-threonyl-[protein] + ADP + H(+). In terms of biological role, kinase involved in a signal transduction pathway that is activated by changes in the osmolarity of the extracellular environment. Activates the PBS2 MAP kinase kinase by phosphorylation. The sequence is that of Serine/threonine-protein kinase SSK22 (SSK22) from Saccharomyces cerevisiae (strain ATCC 204508 / S288c) (Baker's yeast).